The primary structure comprises 414 residues: Esterase FrsA (414 aa).

This sequence belongs to the FrsA family.

The enzyme catalyses a carboxylic ester + H2O = an alcohol + a carboxylate + H(+). Its function is as follows. Catalyzes the hydrolysis of esters. The chain is Esterase FrsA from Escherichia coli O6:K15:H31 (strain 536 / UPEC).